Reading from the N-terminus, the 183-residue chain is Apo-citrate lyase phosphoribosyl-dephospho-CoA transferase (183 aa).

This sequence belongs to the CitX family.

The catalysed reaction is apo-[citrate lyase ACP] + 2'-(5''-triphospho-alpha-D-ribosyl)-3'-dephospho-CoA = holo-[citrate lyase ACP] + diphosphate. Functionally, transfers 2-(5''-triphosphoribosyl)-3'-dephosphocoenzyme-A on a serine residue to the apo-acyl carrier protein (gamma chain) of the citrate lyase to yield holo-acyl carrier protein. In Escherichia coli (strain SMS-3-5 / SECEC), this protein is Apo-citrate lyase phosphoribosyl-dephospho-CoA transferase.